Here is a 320-residue protein sequence, read N- to C-terminus: ATP synthase gamma chain (320 aa).

This sequence belongs to the ATPase gamma chain family. F-type ATPases have 2 components, CF(1) - the catalytic core - and CF(0) - the membrane proton channel. CF(1) has five subunits: alpha(3), beta(3), gamma(1), delta(1), epsilon(1). CF(0) has three main subunits: a, b and c.

Its subcellular location is the cell membrane. In terms of biological role, produces ATP from ADP in the presence of a proton gradient across the membrane. The gamma chain is believed to be important in regulating ATPase activity and the flow of protons through the CF(0) complex. This Lactobacillus delbrueckii subsp. bulgaricus (strain ATCC 11842 / DSM 20081 / BCRC 10696 / JCM 1002 / NBRC 13953 / NCIMB 11778 / NCTC 12712 / WDCM 00102 / Lb 14) protein is ATP synthase gamma chain.